The following is a 381-amino-acid chain: Succinyl-diaminopimelate desuccinylase (381 aa).

His-72 lines the Zn(2+) pocket. Asp-74 is an active-site residue. Asp-105 contacts Zn(2+). Glu-139 acts as the Proton acceptor in catalysis. Glu-140, Glu-168, and His-354 together coordinate Zn(2+).

This sequence belongs to the peptidase M20A family. DapE subfamily. As to quaternary structure, homodimer. Zn(2+) is required as a cofactor. The cofactor is Co(2+).

The catalysed reaction is N-succinyl-(2S,6S)-2,6-diaminopimelate + H2O = (2S,6S)-2,6-diaminopimelate + succinate. Its pathway is amino-acid biosynthesis; L-lysine biosynthesis via DAP pathway; LL-2,6-diaminopimelate from (S)-tetrahydrodipicolinate (succinylase route): step 3/3. Catalyzes the hydrolysis of N-succinyl-L,L-diaminopimelic acid (SDAP), forming succinate and LL-2,6-diaminopimelate (DAP), an intermediate involved in the bacterial biosynthesis of lysine and meso-diaminopimelic acid, an essential component of bacterial cell walls. The sequence is that of Succinyl-diaminopimelate desuccinylase from Shewanella sp. (strain ANA-3).